A 103-amino-acid chain; its full sequence is ATP-dependent Clp protease adapter protein ClpS (103 aa).

This sequence belongs to the ClpS family. Binds to the N-terminal domain of the chaperone ClpA.

Involved in the modulation of the specificity of the ClpAP-mediated ATP-dependent protein degradation. The polypeptide is ATP-dependent Clp protease adapter protein ClpS (Nitrosomonas eutropha (strain DSM 101675 / C91 / Nm57)).